Consider the following 364-residue polypeptide: NADH-quinone oxidoreductase subunit H (364 aa).

The next 8 helical transmembrane spans lie at 15 to 35 (LLVLGQIGLFTLVLLLSIAFL), 84 to 104 (AVFILAPILTCTLAFVTWAAI), 123 to 143 (VGVLYLFAISSLGVYGIIMGG), 169 to 189 (IGFVIVTVILLVGSMNLTTIV), 206 to 226 (YFPLIVVMVPMFVIFFISALA), 257 to 277 (LFMLGEYLNIVLMCAMMTILF), 302 to 322 (LSGLAWFMGKVLFCFFLFALV), and 341 to 361 (IFLPTSLAAVIIVAGYVTFVG).

This sequence belongs to the complex I subunit 1 family. In terms of assembly, NDH-1 is composed of 14 different subunits. Subunits NuoA, H, J, K, L, M, N constitute the membrane sector of the complex.

It is found in the cell inner membrane. The catalysed reaction is a quinone + NADH + 5 H(+)(in) = a quinol + NAD(+) + 4 H(+)(out). NDH-1 shuttles electrons from NADH, via FMN and iron-sulfur (Fe-S) centers, to quinones in the respiratory chain. The immediate electron acceptor for the enzyme in this species is believed to be ubiquinone. Couples the redox reaction to proton translocation (for every two electrons transferred, four hydrogen ions are translocated across the cytoplasmic membrane), and thus conserves the redox energy in a proton gradient. This subunit may bind ubiquinone. This Hyphomonas neptunium (strain ATCC 15444) protein is NADH-quinone oxidoreductase subunit H.